Reading from the N-terminus, the 201-residue chain is Putative pseudouridine methyltransferase (201 aa).

Residues Met132 and Cys186 each coordinate S-adenosyl-L-methionine.

It belongs to the methyltransferase superfamily. TrmY family.

It is found in the cytoplasm. The chain is Putative pseudouridine methyltransferase from Vibrio cholerae serotype O1 (strain ATCC 39315 / El Tor Inaba N16961).